We begin with the raw amino-acid sequence, 735 residues long: Rho GTPase-activating protein SYDE1 (735 aa).

A disordered region spans residues 1 to 253 (MAEPLLRKTF…SPTSFRPYEV (253 aa)). Residues 14–31 (RGREKLPRKKSDAKERGH) show a composition bias toward basic and acidic residues. Over residues 35 to 46 (RPEPSPPEPEPQ) the composition is skewed to pro residues. Positions 47 to 71 (APEGSQAGAEGPSSPEASRSPARGA) are enriched in low complexity. Over residues 122–131 (PPAPEPPGPQ) the composition is skewed to pro residues. Residues 211-221 (GGPGPAAGPGG) are compositionally biased toward gly residues. Residues Ser-224, Ser-231, Ser-235, and Ser-244 each carry the phosphoserine modification. Residues 249–366 (RPYEVGPAAR…FRGCQAQQLA (118 aa)) enclose the C2 domain. Positions 398-604 (LPLPLLVERE…YLLQSWPDPR (207 aa)) constitute a Rho-GAP domain. Ser-575 bears the Phosphoserine mark. Disordered regions lie at residues 608 to 651 (QSPD…SNRY) and 674 to 696 (DYDH…PRVT). Residues Ser-681 and Ser-683 each carry the phosphoserine modification.

Post-translationally, palmitoylated. Probably palmitoylated by ZDHHC3 and ZDHHC7. In terms of tissue distribution, expressed in trophoblast cells of placental villi.

Its function is as follows. GTPase activator for the Rho-type GTPases. As a GCM1 downstream effector, it is involved in placental development and positively regulates trophoblast cells migration. It regulates cytoskeletal remodeling by controlling the activity of Rho GTPases including RHOA, CDC42 and RAC1. In Homo sapiens (Human), this protein is Rho GTPase-activating protein SYDE1 (SYDE1).